The sequence spans 148 residues: Large ribosomal subunit protein bL9 (148 aa).

Belongs to the bacterial ribosomal protein bL9 family.

Functionally, binds to the 23S rRNA. The polypeptide is Large ribosomal subunit protein bL9 (Parafrankia sp. (strain EAN1pec)).